Consider the following 950-residue polypeptide: Protocadherin alpha-6 (950 aa).

An N-terminal signal peptide occupies residues 1–29 (MVFTPEDRLGKQCLLLPLLLLAAWKVGSG). Over 30 to 697 (QLHYSVPEEA…GPEAALVDVN (668 aa)) the chain is Extracellular. 6 consecutive Cadherin domains span residues 34 to 133 (SVPE…PPLF), 157 to 242 (ASDA…APNF), 243 to 350 (EQSE…VPEI), 351 to 455 (ALTS…APAF), 456 to 565 (AQPE…APAL), and 581 to 678 (VPRS…APKA). N-linked (GlcNAc...) asparagine glycosylation is found at asparagine 257, asparagine 265, asparagine 386, and asparagine 548. A helical membrane pass occupies residues 698–718 (VYLIIAICAVSSLLVLTLLLY). Residues 719-950 (TALRCSAPST…GNSTTDNSDQ (232 aa)) are Cytoplasmic-facing. 4 PXXP repeats span residues 799 to 802 (PRQP), 832 to 835 (PGGP), 873 to 876 (PGNP), and 891 to 894 (PGSP). Positions 799-894 (PRQPNPDWRY…PDKFIIPGSP (96 aa)) are 4 X 4 AA repeats of P-X-X-P. The disordered stretch occupies residues 830-889 (AGPGGPDQQWPTVSSATPEPEAGEVSPPVGAGVNSNSWTFKYGPGNPKQSGPGELPDKFI). Residues 901–950 (QEPANSQIDKSDFITFGKKEETKKKKKKKKGNKTQEKKEKGNSTTDNSDQ) are disordered. Positions 909–923 (DKSDFITFGKKEETK) are enriched in basic and acidic residues.

It localises to the cell membrane. Potential calcium-dependent cell-adhesion protein. May be involved in the establishment and maintenance of specific neuronal connections in the brain. In Pan troglodytes (Chimpanzee), this protein is Protocadherin alpha-6 (PCDHA6).